The primary structure comprises 334 residues: Glycerol-1-phosphate dehydrogenase [NAD(P)+] (334 aa).

NAD(+)-binding positions include 77–81 and 99–102; these read GRPID and TTAS. Position 104 (D104) interacts with substrate. S108 lines the NAD(+) pocket. Residue D147 participates in substrate binding. Zn(2+)-binding residues include D147 and H225. H229 is a binding site for substrate. H246 contributes to the Zn(2+) binding site.

It belongs to the glycerol-1-phosphate dehydrogenase family. It depends on Zn(2+) as a cofactor.

It is found in the cytoplasm. The enzyme catalyses sn-glycerol 1-phosphate + NAD(+) = dihydroxyacetone phosphate + NADH + H(+). It carries out the reaction sn-glycerol 1-phosphate + NADP(+) = dihydroxyacetone phosphate + NADPH + H(+). The protein operates within membrane lipid metabolism; glycerophospholipid metabolism. Functionally, catalyzes the NAD(P)H-dependent reduction of dihydroxyacetonephosphate (DHAP or glycerone phosphate) to glycerol 1-phosphate (G1P). The G1P thus generated is used as the glycerophosphate backbone of phospholipids in the cellular membranes of Archaea. This chain is Glycerol-1-phosphate dehydrogenase [NAD(P)+], found in Methanococcus maripaludis (strain C7 / ATCC BAA-1331).